The following is a 336-amino-acid chain: Pyridoxal 5'-phosphate synthase subunit PdxS (336 aa).

A D-ribose 5-phosphate-binding site is contributed by Asp30. Lys87 serves as the catalytic Schiff-base intermediate with D-ribose 5-phosphate. Gly159 contacts D-ribose 5-phosphate. Arg171 contributes to the D-glyceraldehyde 3-phosphate binding site. Residues Gly257 and 278–279 contribute to the D-ribose 5-phosphate site; that span reads GS.

Belongs to the PdxS/SNZ family. As to quaternary structure, in the presence of PdxT, forms a dodecamer of heterodimers.

The enzyme catalyses aldehydo-D-ribose 5-phosphate + D-glyceraldehyde 3-phosphate + L-glutamine = pyridoxal 5'-phosphate + L-glutamate + phosphate + 3 H2O + H(+). It functions in the pathway cofactor biosynthesis; pyridoxal 5'-phosphate biosynthesis. Functionally, catalyzes the formation of pyridoxal 5'-phosphate from ribose 5-phosphate (RBP), glyceraldehyde 3-phosphate (G3P) and ammonia. The ammonia is provided by the PdxT subunit. Can also use ribulose 5-phosphate and dihydroxyacetone phosphate as substrates, resulting from enzyme-catalyzed isomerization of RBP and G3P, respectively. The protein is Pyridoxal 5'-phosphate synthase subunit PdxS of Thermoplasma volcanium (strain ATCC 51530 / DSM 4299 / JCM 9571 / NBRC 15438 / GSS1).